The primary structure comprises 291 residues: MGVAARPPALRHWFSHSIPLAIFALLLLYLSVRSLGARSGCGPRAQPCVPGETAPFQVRQESGTLEAPERKQPPCLGPRGMLGRMMRRFHASLKPEGDVGLSPYLAGWRALVEFLTPLGSVFAFATREAFTKVTDLEARVHGPDAEHYWSLVAMAAWERRAGLLEQPGAAPRDPTRSSGSRTLLLLHRALRWSQLCLHRVATGALGGPDAGVQCSDAYRAALGPHHPWLVRQTARLAFLAFPGRRRLLELACPGATEAEARAALVRAAGTLEDVYNRTQSLLAERGLLQLA.

A glycan (N-linked (GlcNAc...) asparagine) is linked at asparagine 276.

This sequence belongs to the GLTP family.

The protein is Glycolipid transfer protein domain-containing protein 2 (GLTPD2) of Homo sapiens (Human).